Reading from the N-terminus, the 157-residue chain is Transcription antitermination protein NusB (157 aa).

The protein belongs to the NusB family.

Functionally, involved in transcription antitermination. Required for transcription of ribosomal RNA (rRNA) genes. Binds specifically to the boxA antiterminator sequence of the ribosomal RNA (rrn) operons. This Xylella fastidiosa (strain 9a5c) protein is Transcription antitermination protein NusB.